A 602-amino-acid polypeptide reads, in one-letter code: Leucine-rich repeat-containing protein 40 (602 aa).

A disordered region spans residues 1-20 (MSRLKRIAGQDPRAGFKAAG). Residue Ser71 is modified to Phosphoserine. LRR repeat units lie at residues 83–104 (DLTK…LRLL), 106–127 (ALTV…MREL), 129–150 (NLQK…ITNL), 152–173 (NLKC…FEQL), 175–196 (NLED…FSSL), 198–219 (SLVR…INRM), 221–242 (RLKH…LAGM), 244–265 (SLEL…PSCS), 266–286 (LLKE…EHLK), 290–311 (SILV…IILL), 313–335 (SLER…GNLH), 336–356 (LKFL…IINK), 400–421 (TLKI…VFNA), 426–447 (IITS…MVEL), 450–471 (MVSD…LCML), 473–494 (KLTF…MESL), 496–517 (RLQT…LYRI), 519–540 (TLET…KMKM), 543–564 (NLTT…LGNC), and 566–586 (NLRT…AILI).

The chain is Leucine-rich repeat-containing protein 40 (LRRC40) from Macaca fascicularis (Crab-eating macaque).